Consider the following 237-residue polypeptide: Methylthioribulose-1-phosphate dehydratase (237 aa).

Cysteine 97 is a substrate binding site. Zn(2+)-binding residues include histidine 114 and histidine 116. The active-site Proton donor/acceptor is glutamate 143. Histidine 199 contributes to the Zn(2+) binding site.

This sequence belongs to the aldolase class II family. MtnB subfamily. Requires Zn(2+) as cofactor.

Its subcellular location is the cytoplasm. It catalyses the reaction 5-(methylsulfanyl)-D-ribulose 1-phosphate = 5-methylsulfanyl-2,3-dioxopentyl phosphate + H2O. It functions in the pathway amino-acid biosynthesis; L-methionine biosynthesis via salvage pathway; L-methionine from S-methyl-5-thio-alpha-D-ribose 1-phosphate: step 2/6. In terms of biological role, catalyzes the dehydration of methylthioribulose-1-phosphate (MTRu-1-P) into 2,3-diketo-5-methylthiopentyl-1-phosphate (DK-MTP-1-P). The polypeptide is Methylthioribulose-1-phosphate dehydratase (Coccidioides posadasii (strain C735) (Valley fever fungus)).